The chain runs to 238 residues: ATP synthase subunit a (238 aa).

Transmembrane regions (helical) follow at residues isoleucine 15–isoleucine 35, tyrosine 76–methionine 96, proline 111–isoleucine 131, leucine 167–leucine 187, and alanine 208–glycine 230.

This sequence belongs to the ATPase A chain family. As to quaternary structure, F-type ATPases have 2 components, CF(1) - the catalytic core - and CF(0) - the membrane proton channel. CF(1) has five subunits: alpha(3), beta(3), gamma(1), delta(1), epsilon(1). CF(0) has three main subunits: a(1), b(2) and c(9-12). The alpha and beta chains form an alternating ring which encloses part of the gamma chain. CF(1) is attached to CF(0) by a central stalk formed by the gamma and epsilon chains, while a peripheral stalk is formed by the delta and b chains.

The protein resides in the cell membrane. Functionally, key component of the proton channel; it plays a direct role in the translocation of protons across the membrane. This chain is ATP synthase subunit a, found in Streptococcus pneumoniae (strain ATCC BAA-255 / R6).